The primary structure comprises 1120 residues: Putative GTPase-activating protein AN11010 (1120 aa).

Residues 291–479 (GLPNRLRGEI…RVLDVFFLEG (189 aa)) enclose the Rab-GAP TBC domain. Disordered stretches follow at residues 673 to 702 (DSPGPSRKQSDSGSFRGLGRPTMNKRPSPA), 859 to 903 (DEVK…PNNP), 960 to 979 (AAKQQPTSSGPTVAGASGGI), 1017 to 1068 (RNAL…ETDR), and 1081 to 1120 (GKDDVSLLDDKDSHQESSSGQRTAAGSDDKVVSKVVEFES). A compositionally biased stretch (low complexity) spans 864-878 (ESTPSPEGETPGTPS). Residues 960 to 970 (AAKQQPTSSGP) are compositionally biased toward polar residues. A compositionally biased stretch (acidic residues) spans 1023 to 1032 (DDDDEDDEDD). Composition is skewed to basic and acidic residues over residues 1057 to 1068 (DPERRSVRETDR) and 1081 to 1095 (GKDDVSLLDDKDSHQ).

The sequence is that of Putative GTPase-activating protein AN11010 from Emericella nidulans (strain FGSC A4 / ATCC 38163 / CBS 112.46 / NRRL 194 / M139) (Aspergillus nidulans).